We begin with the raw amino-acid sequence, 33 residues long: MSIEVIAQLASLALIIVLGPLVIGLLAARKGNL.

The helical transmembrane segment at 5–25 threads the bilayer; the sequence is VIAQLASLALIIVLGPLVIGL.

It belongs to the Psb30/Ycf12 family. In terms of assembly, PSII is composed of 1 copy each of membrane proteins PsbA, PsbB, PsbC, PsbD, PsbE, PsbF, PsbH, PsbI, PsbJ, PsbK, PsbL, PsbM, PsbT, PsbX, PsbY, PsbZ, Psb30/Ycf12, peripheral proteins of the oxygen-evolving complex and a large number of cofactors. It forms dimeric complexes.

Its subcellular location is the plastid. The protein resides in the chloroplast thylakoid membrane. Its function is as follows. A core subunit of photosystem II (PSII), probably helps stabilize the reaction center. In Chara vulgaris (Common stonewort), this protein is Photosystem II reaction center protein Psb30.